A 162-amino-acid chain; its full sequence is uncharacterized protein (162 aa).

A helical membrane pass occupies residues 6-24 (SYLISIFYIILITSETTAF).

It localises to the membrane. This is an uncharacterized protein from Caenorhabditis elegans.